The primary structure comprises 582 residues: Putative frv operon regulatory protein (582 aa).

Positions Pro20–Asp39 form a DNA-binding region, H-T-H motif. The 140-residue stretch at Arg443–Gly582 folds into the PTS EIIA type-2 domain. A Phosphohistidine; by HPr modification is found at His505.

Its function is as follows. Could be involved in the regulation of the transcription of the FRV operon. The sequence is that of Putative frv operon regulatory protein (frvR) from Escherichia coli (strain K12).